The sequence spans 186 residues: uncharacterized protein (186 aa).

Residues 1 to 21 (MKFFLGSALFLILTFINLVRA) form the signal peptide. Over 22–142 (EFEFITPAED…AFSVNPIDKK (121 aa)) the chain is Extracellular. N62, N75, N93, and N104 each carry an N-linked (GlcNAc...) asparagine glycan. The chain crosses the membrane as a helical span at residues 143-163 (LAIGLSVGLSCCILIVLFLHF). Over 164 to 186 (ATRRERRILKNEKELEMSSYRKH) the chain is Cytoplasmic.

It is found in the membrane. This is an uncharacterized protein from Schizosaccharomyces pombe (strain 972 / ATCC 24843) (Fission yeast).